The chain runs to 96 residues: Dynein light chain roadblock-type 1 (96 aa).

The residue at position 2 (alanine 2) is an N-acetylalanine.

Belongs to the GAMAD family. As to quaternary structure, homodimer. The cytoplasmic dynein 1 complex consists of two catalytic heavy chains (HCs) and a number of non-catalytic subunits presented by intermediate chains (ICs), light intermediate chains (LICs) and light chains (LCs); the composition seems to vary in respect to the IC, LIC and LC composition. The heavy chain homodimer serves as a scaffold for the probable homodimeric assembly of the respective non-catalytic subunits. The ICs and LICs bind directly to the HC dimer and the LCs assemble on the IC dimer. Interacts with DYNLRB2. Interacts with DYNC1I1 and DYNC1I2. Interacts with RAB6A isoform 1 (GTP-bound); the interaction is direct. Interacts with RAB6A isoform 2 (GDP-bound); the interaction is direct. Interacts with RAB6B (GDP-bound).

It is found in the cytoplasm. The protein localises to the cytoskeleton. Acts as one of several non-catalytic accessory components of the cytoplasmic dynein 1 complex that are thought to be involved in linking dynein to cargos and to adapter proteins that regulate dynein function. Cytoplasmic dynein 1 acts as a motor for the intracellular retrograde motility of vesicles and organelles along microtubules. The sequence is that of Dynein light chain roadblock-type 1 (Dynlrb1) from Mus musculus (Mouse).